The primary structure comprises 96 residues: UPF0235 protein VCM66_0443 (96 aa).

It belongs to the UPF0235 family.

The protein is UPF0235 protein VCM66_0443 of Vibrio cholerae serotype O1 (strain M66-2).